A 148-amino-acid chain; its full sequence is Ribonuclease pancreatic (148 aa).

The signal sequence occupies residues 1–25 (MGLEKSLILLPLLVLVFGWVQSSLG). The substrate site is built by K32 and R35. Residue H36 is the Proton acceptor of the active site. 4 disulfides stabilise this stretch: C50-C108, C64-C119, C82-C134, and C89-C96. N-linked (GlcNAc...) asparagine glycosylation occurs at N58. Substrate is bound at residue 65-69 (KPVNT). N-linked (GlcNAc...) asparagine glycosylation is present at N86. K90 and R109 together coordinate substrate. H143 serves as the catalytic Proton donor.

The protein belongs to the pancreatic ribonuclease family. Monomer. Interacts with and forms tight 1:1 complexes with RNH1. Dimerization of two such complexes may occur. Interaction with RNH1 inhibits this protein. In terms of tissue distribution, pancreas.

The protein resides in the secreted. The enzyme catalyses an [RNA] containing cytidine + H2O = an [RNA]-3'-cytidine-3'-phosphate + a 5'-hydroxy-ribonucleotide-3'-[RNA].. It carries out the reaction an [RNA] containing uridine + H2O = an [RNA]-3'-uridine-3'-phosphate + a 5'-hydroxy-ribonucleotide-3'-[RNA].. Its function is as follows. Endonuclease that catalyzes the cleavage of RNA on the 3' side of pyrimidine nucleotides. Acts on single-stranded and double-stranded RNA. The sequence is that of Ribonuclease pancreatic (RNASE1) from Chionomys nivalis (European snow vole).